We begin with the raw amino-acid sequence, 827 residues long: Inactive rhomboid protein 2 (827 aa).

Residues 1-87 (MDSTDKNGES…GFRRQASLSQ (87 aa)) form a disordered region. At 1–380 (MDSTDKNGES…HRPYFTYWLT (380 aa)) the chain is on the cytoplasmic side. Ser-60 is subject to Phosphoserine. Residues 64–77 (QRGRWQEGSSEKRP) are compositionally biased toward basic and acidic residues. Residues Ser-84, Ser-88, Ser-294, Ser-296, and Ser-299 each carry the phosphoserine modification. The helical transmembrane segment at 381–401 (FVHIIITLLVICTYGIAPVGF) threads the bilayer. The Lumenal portion of the chain corresponds to 402 to 631 (AQHVTTQLVL…PDQFYRLWLS (230 aa)). Residues 632-652 (LFLHAGVVHCLVSVVFQMTIL) traverse the membrane as a helical segment. Topologically, residues 653–663 (RDLEKLAGWHR) are cytoplasmic. A helical membrane pass occupies residues 664–684 (IAIIFILSGITGNLASAIFLP). At 685 to 686 (YR) the chain is on the lumenal side. The chain crosses the membrane as a helical span at residues 687 to 707 (AEVGPAGSQFGLLACLFVELF). The Cytoplasmic portion of the chain corresponds to 708–718 (QSWQLLERPWK). The helical transmembrane segment at 719 to 739 (AFLNLSAIVLFLFICGLLPWI) threads the bilayer. Residues 740–744 (DNIAH) are Lumenal-facing. A helical transmembrane segment spans residues 745 to 765 (IFGFLSGLLLAFAFLPYITFG). The Cytoplasmic portion of the chain corresponds to 766-773 (TSDKYRKR). Residues 774–794 (ALILVSLLVFAGLFASLVIWL) traverse the membrane as a helical segment. The Lumenal segment spans residues 795–827 (YVYPINWPWIEYLTCFPFTSRFCEKYELDQVLH).

The protein belongs to the peptidase S54 family. Interacts with EGF. Interacts (via cytoplasmic N-terminus) with FRMD8/iTAP; this interaction leads to mutual protein stabilization. Interacts with ADAM17/TACE. Detected in retina and spleen.

The protein localises to the endoplasmic reticulum membrane. It localises to the cell membrane. Functionally, regulates ADAM17 protease, a sheddase of the epidermal growth factor (EGF) receptor ligands and TNF, thereby plays a role in sleep, cell survival, proliferation, migration and inflammation. Does not exhibit any protease activity on its own. The polypeptide is Inactive rhomboid protein 2 (RHBDF2) (Canis lupus familiaris (Dog)).